Consider the following 96-residue polypeptide: Co-chaperonin GroES (96 aa).

This sequence belongs to the GroES chaperonin family. Heptamer of 7 subunits arranged in a ring. Interacts with the chaperonin GroEL.

It localises to the cytoplasm. In terms of biological role, together with the chaperonin GroEL, plays an essential role in assisting protein folding. The GroEL-GroES system forms a nano-cage that allows encapsulation of the non-native substrate proteins and provides a physical environment optimized to promote and accelerate protein folding. GroES binds to the apical surface of the GroEL ring, thereby capping the opening of the GroEL channel. The polypeptide is Co-chaperonin GroES (Delftia acidovorans (strain DSM 14801 / SPH-1)).